The following is a 538-amino-acid chain: Atos homolog protein B (538 aa).

Over residues 1 to 18 (MRHVQAEPSPSSEPEAGP) the composition is skewed to low complexity. Disordered stretches follow at residues 1 to 103 (MRHV…GLLG), 153 to 185 (NTLH…QLHT), 197 to 300 (GGKS…VLDP), and 323 to 342 (SLRK…VPTP). The segment covering 227 to 238 (HTPPGPGPPGPC) has biased composition (pro residues). Phosphoserine is present on residues S254 and S255. The span at 323-334 (SLRKGPGLLSPP) shows a compositional bias: low complexity. Residues 348-430 (LLGSFEESLL…VPKVGTIQVT (83 aa)) form a required for macropage invasion region. The transactivation domain 1 (TAD1) stretch occupies residues 436–444 (QTVVKMFLV).

The protein belongs to the ATOS family.

It is found in the nucleus. Transcription regulator that may syncronize transcriptional and translational programs. The polypeptide is Atos homolog protein B (Pongo abelii (Sumatran orangutan)).